Here is a 1401-residue protein sequence, read N- to C-terminus: MQCYTELLSPSGVTHALAIPFLSASAENLVVVKTSVLQIFSLLKVQHHSRGETIETKSARPDQVETTKLVLEREYPLSGTVVDICRVKILNSKSGGEALLLAFRNAKLSLVEWDPERHGISTISIHYYERDDLTRSPWVPDLSSCGSILSVDPSSRCAVFNFGIRNLAILPFHQPGDDLAMDDYEFHLHQDDLNQVSDHVGNGLKSKDSTVYQTPYASSFVLPLTALDPSILHPVSLAFLYEYREPTFGILYSQIATSHALLSERKDSIFYTVFTLDLEQRASTTLLSVPKLPSDLFKVVALPPPVGGALLIGSNELVHVDQAGKTNAVGVNEFARQVSAFSMVDQSDLALRLEGCVVEHISDSTGDLLLVLSSGNMVLVHFQLDGRSVSGISLRPLPTQAGGTIMKSAASSSAFLGSGRVFFGSEDADSVLLSWSSMPNPKKSRPRMSNVAEDREEASDDSQSEEDAYEDDLYTAEPETPALGRRPSAETTGVGAYIFQTLDRLPNIGPLRDITLGKPASTVENTGRLIKNACSELELVAAQGSGRNGGLVLMKREIEPDVTASFDAQSVQEVWTAVVALGSGAPLVLDEQQINQEYRQYVILSKPETPDKETSEVFIADTQDLKPFRAPEFNPNNDVTIEIGTLSCKKRVVQVLRNEVRSYDIDLGLAQIYPVWDEDTSDERMAVSASLADPYIAILRDDSTLMILQADDSGDLDEVELNEAARAGKWRSCCLYWDKAEFFSSTGPALKQGTRCELFLFLLSIDCRLYVYRLPDQQLISVIEGIDCLPPILSTELPKRSTTREVLSEAVIADLGESWNPSPHLILRTESDDLVIYKAFASYIKGESHTRLSFVKESNHTLPRVTTSEKEMQSNEKLSRPRSLRILPNISNFSAVFMPGRPASFILKTAKSCPHVFRLRGEFVRSLSIFDLASPSLDTGFIYVDSKDVLRICRFPSETLFDYTWALRKISIGEQVDHLAYATSSETYVLGTSHSADFKLPDDDELHPDWRNEGLVISFLPELRQCSLKVVSPRTWTVIDSYSLGPDEYVMAVKNMDLEVSENTHERRNMIVVGTAFARGEDIPSRGCIYVFEVIKVVPDPEKPETDRKLKLIGKELVKGAVTALSQIGGQGFLIAAQGQKCMVRGLKEDGSLLPVAFMDMQCYVNVLKELKGTGMCIMGDAVKGLWFAGYSEEPYKMSLFGKDQGYLEVVAAEFLPDGDKLFILVADSDCNLHVLQYDPEDPKSSNGDRLLARSKFHMGHFATTMTLLPRTMVSSEKAMANPDSMEIDSQTISQQVLITSQSGSVGIVTSVPEESYRRLSALQSQLANSLEHPCGLNPRAYRAVESDGTAGRGMLDGNLLYQWLDMGQHRKMEIAARVGAHEWEIKADLEAIGAEGLGYL.

Positions 434–489 (SWSSMPNPKKSRPRMSNVAEDREEASDDSQSEEDAYEDDLYTAEPETPALGRRPSA) are disordered. A compositionally biased stretch (acidic residues) spans 454-474 (DREEASDDSQSEEDAYEDDLY).

This sequence belongs to the CFT1 family.

The protein localises to the nucleus. RNA-binding component of the cleavage and polyadenylation factor (CPF) complex, which plays a key role in polyadenylation-dependent pre-mRNA 3'-end formation and cooperates with cleavage factors including the CFIA complex and NAB4/CFIB. Involved in poly(A) site recognition. May be involved in coupling transcription termination and mRNA 3'-end formation. This chain is Protein cft1 (cft1), found in Aspergillus fumigatus (strain ATCC MYA-4609 / CBS 101355 / FGSC A1100 / Af293) (Neosartorya fumigata).